Here is a 597-residue protein sequence, read N- to C-terminus: Elongation factor 4 (597 aa).

The 183-residue stretch at 2 to 184 (DHIRNFSIIA…SLIAKVPPPK (183 aa)) folds into the tr-type G domain. GTP contacts are provided by residues 14 to 19 (DHGKST) and 131 to 134 (NKID).

It belongs to the TRAFAC class translation factor GTPase superfamily. Classic translation factor GTPase family. LepA subfamily.

It localises to the cell inner membrane. It carries out the reaction GTP + H2O = GDP + phosphate + H(+). In terms of biological role, required for accurate and efficient protein synthesis under certain stress conditions. May act as a fidelity factor of the translation reaction, by catalyzing a one-codon backward translocation of tRNAs on improperly translocated ribosomes. Back-translocation proceeds from a post-translocation (POST) complex to a pre-translocation (PRE) complex, thus giving elongation factor G a second chance to translocate the tRNAs correctly. Binds to ribosomes in a GTP-dependent manner. In Burkholderia lata (strain ATCC 17760 / DSM 23089 / LMG 22485 / NCIMB 9086 / R18194 / 383), this protein is Elongation factor 4.